A 205-amino-acid chain; its full sequence is Cytochrome c biogenesis ATP-binding export protein CcmA (205 aa).

The 203-residue stretch at 2 to 204 (LEVSNLTAIR…SPKLRKIKLG (203 aa)) folds into the ABC transporter domain. 34-41 (GRNGTGKT) lines the ATP pocket.

Belongs to the ABC transporter superfamily. CcmA exporter (TC 3.A.1.107) family. The complex is composed of two ATP-binding proteins (CcmA) and two transmembrane proteins (CcmB).

It is found in the cell inner membrane. The enzyme catalyses heme b(in) + ATP + H2O = heme b(out) + ADP + phosphate + H(+). In terms of biological role, part of the ABC transporter complex CcmAB involved in the biogenesis of c-type cytochromes; once thought to export heme, this seems not to be the case, but its exact role is uncertain. Responsible for energy coupling to the transport system. This is Cytochrome c biogenesis ATP-binding export protein CcmA from Vibrio vulnificus (strain YJ016).